We begin with the raw amino-acid sequence, 166 residues long: Myeloid-derived growth factor (166 aa).

The N-terminal stretch at 1-24 is a signal peptide; it reads MAAPSGGFWTAVVLAAAALKLAAA.

It belongs to the MYDGF family. In terms of tissue distribution, expressed in prostate, spleen and lung, and weakly expressed in the left ventricle (LF) and liver. Expressed predominantly in inflammatory cells, such as monocytes and macrophages, and weakly expressed in neutrophils, T-cells, B-cells, endothelial cells and cardiac myocytes, after myocardial infarction (MI) (at protein level).

The protein localises to the secreted. The protein resides in the endoplasmic reticulum-Golgi intermediate compartment. It localises to the endoplasmic reticulum. It is found in the golgi apparatus. In terms of biological role, bone marrow-derived monocyte and paracrine-acting protein that promotes cardiac myocyte survival and adaptive angiogenesis for cardiac protection and/or repair after myocardial infarction (MI). Stimulates endothelial cell proliferation through a MAPK1/3-, STAT3- and CCND1-mediated signaling pathway. Inhibits cardiac myocyte apoptosis in a PI3K/AKT-dependent signaling pathway. The protein is Myeloid-derived growth factor of Mus musculus (Mouse).